Here is a 677-residue protein sequence, read N- to C-terminus: Methionine--tRNA ligase (677 aa).

The short motif at 15–25 (PYANGSIHLGH) is the 'HIGH' region element. 4 residues coordinate Zn(2+): C146, C149, C159, and C162. Positions 333–337 (KMSKS) match the 'KMSKS' region motif. K336 serves as a coordination point for ATP. The 103-residue stretch at 575 to 677 (DFAKVDLRVA…AGAKPGHQVK (103 aa)) folds into the tRNA-binding domain.

This sequence belongs to the class-I aminoacyl-tRNA synthetase family. MetG type 1 subfamily. As to quaternary structure, homodimer. Requires Zn(2+) as cofactor.

It localises to the cytoplasm. It catalyses the reaction tRNA(Met) + L-methionine + ATP = L-methionyl-tRNA(Met) + AMP + diphosphate. Is required not only for elongation of protein synthesis but also for the initiation of all mRNA translation through initiator tRNA(fMet) aminoacylation. The protein is Methionine--tRNA ligase of Shigella sonnei (strain Ss046).